A 162-amino-acid chain; its full sequence is Phospholipase A and acyltransferase 3 (162 aa).

The Cytoplasmic segment spans residues 1–133 (MRAPIPEPKP…VARSDQVRDV (133 aa)). An LRAT domain is found at 13–129 (LIEIFRPFYR…LRYGVARSDQ (117 aa)). Catalysis depends on residues histidine 23 and histidine 35. The active-site Acyl-thioester intermediate is cysteine 113. The chain crosses the membrane as a helical span at residues 134 to 154 (IIAASAAGMGLAAMSLIGVMF). Residues 155–162 (SRNKRQKQ) are Lumenal-facing.

Belongs to the H-rev107 family. In terms of assembly, interacts with PPP2R1A; this interaction might decrease PP2A activity.

The protein localises to the cell membrane. It localises to the cytoplasm. Its subcellular location is the cytosol. The protein resides in the perinuclear region. It is found in the peroxisome membrane. The protein localises to the mitochondrion membrane. It localises to the nucleus envelope. Its subcellular location is the lysosome membrane. The protein resides in the endoplasmic reticulum membrane. The catalysed reaction is a 1,2-diacyl-sn-glycero-3-phosphocholine + H2O = a 1-acyl-sn-glycero-3-phosphocholine + a fatty acid + H(+). It carries out the reaction a 1,2-diacyl-sn-glycero-3-phosphocholine + H2O = a 2-acyl-sn-glycero-3-phosphocholine + a fatty acid + H(+). The enzyme catalyses 1,2-dihexadecanoyl-sn-glycero-3-phosphocholine + H2O = 1-hexadecanoyl-sn-glycero-3-phosphocholine + hexadecanoate + H(+). It catalyses the reaction 1,2-dihexadecanoyl-sn-glycero-3-phosphocholine + H2O = 2-hexadecanoyl-sn-glycero-3-phosphocholine + hexadecanoate + H(+). The catalysed reaction is 1-hexadecanoyl-2-(9Z-octadecenoyl)-sn-glycero-3-phosphocholine + H2O = 2-(9Z-octadecenoyl)-sn-glycero-3-phosphocholine + hexadecanoate + H(+). It carries out the reaction 1-hexadecanoyl-2-(9Z-octadecenoyl)-sn-glycero-3-phosphocholine + H2O = 1-hexadecanoyl-sn-glycero-3-phosphocholine + (9Z)-octadecenoate + H(+). The enzyme catalyses 1-hexadecanoyl-2-(5Z,8Z,11Z,14Z-eicosatetraenoyl)-sn-glycero-3-phosphocholine + H2O = 1-hexadecanoyl-sn-glycero-3-phosphocholine + (5Z,8Z,11Z,14Z)-eicosatetraenoate + H(+). It catalyses the reaction 1-hexadecanoyl-2-(5Z,8Z,11Z,14Z-eicosatetraenoyl)-sn-glycero-3-phosphocholine + H2O = 2-(5Z,8Z,11Z,14Z)-eicosatetraenoyl-sn-glycero-3-phosphocholine + hexadecanoate + H(+). The catalysed reaction is 1-hexadecanoyl-2-(9Z,12Z-octadecadienoyl)-sn-glycero-3-phosphoethanolamine + H2O = 1-hexadecanoyl-sn-glycero-3-phosphoethanolamine + (9Z,12Z)-octadecadienoate + H(+). It carries out the reaction 1-hexadecanoyl-2-(9Z,12Z-octadecadienoyl)-sn-glycero-3-phosphoethanolamine + H2O = 2-(9Z,12Z)-octadecadienoyl-sn-glycero-3-phosphoethanolamine + hexadecanoate + H(+). The enzyme catalyses 1-hexadecanoyl-2-(5Z,8Z,11Z,14Z-eicosatetraenoyl)-sn-glycero-3-phosphoethanolamine + H2O = 1-hexadecanoyl-sn-glycero-3-phosphoethanolamine + (5Z,8Z,11Z,14Z)-eicosatetraenoate + H(+). It catalyses the reaction 1-hexadecanoyl-2-(5Z,8Z,11Z,14Z-eicosatetraenoyl)-sn-glycero-3-phosphoethanolamine + H2O = 2-(5Z,8Z,11Z,14Z)-eicosatetraenoyl-sn-glycero-3-phosphoethanolamine + hexadecanoate + H(+). The catalysed reaction is 1-hexanoyl-2-acyl-sn-glycero-3-phosphocholine + H2O = hexanoate + a 2-acyl-sn-glycero-3-phosphocholine + H(+). It carries out the reaction 1-hexanoyl-2-acyl-sn-glycero-3-phosphocholine + H2O = 1-hexanoyl-sn-glycero-3-phosphocholine + a fatty acid + H(+). The enzyme catalyses 1,2-diheptadecanoyl-sn-glycero-3-phosphoethanolamine + 1-(9Z-octadecenoyl)-2-hexadecanoyl-sn-glycero-3-phosphocholine = 1,2-diheptadecanoyl-sn-glycero-3-phospho-N-hexadecanoyl-ethanolamine + 1-(9Z-octadecenoyl)-sn-glycero-3-phosphocholine + H(+). It catalyses the reaction 1,2-diheptadecanoyl-sn-glycero-3-phosphoethanolamine + 1-(9Z-octadecenoyl)-2-hexadecanoyl-sn-glycero-3-phosphocholine = 1,2-diheptadecanoyl-sn-glycero-3-phospho-N-(9Z-octadecenoyl)-ethanolamine + 2-hexadecanoyl-sn-glycero-3-phosphocholine + H(+). The catalysed reaction is 1,2-dihexanoyl-sn-glycero-3-phosphoethanolamine + 2-heptanoyl-sn-glycero-3-phosphocholine = hexanoyl-sn-glycero-3-phosphoethanolamine + 1-hexanoyl-2-heptanoyl-sn-glycero-3-phosphocholine. It carries out the reaction 1-hexadecanoyl-2-octadecanoyl-sn-glycero-3-phosphocholine + H2O = octadecanoate + 1-hexadecanoyl-sn-glycero-3-phosphocholine + H(+). The enzyme catalyses 1-hexadecanoyl-2-octadecanoyl-sn-glycero-3-phosphocholine + H2O = 2-octadecanoyl-sn-glycero-3-phosphocholine + hexadecanoate + H(+). It catalyses the reaction 1-octadecanoyl-2-hexadecanoyl-sn-glycero-3-phosphocholine + H2O = 1-octadecanoyl-sn-glycero-3-phosphocholine + hexadecanoate + H(+). The catalysed reaction is 1-octadecanoyl-2-hexadecanoyl-sn-glycero-3-phosphocholine + H2O = 2-hexadecanoyl-sn-glycero-3-phosphocholine + octadecanoate + H(+). It carries out the reaction 1-hexadecanoyl-2-(9Z,12Z-octadecadienoyl)-sn-glycero-3-phosphocholine + H2O = (9Z,12Z)-octadecadienoate + 1-hexadecanoyl-sn-glycero-3-phosphocholine + H(+). The enzyme catalyses 1-hexadecanoyl-2-(9Z,12Z-octadecadienoyl)-sn-glycero-3-phosphocholine + H2O = 2-(9Z,12Z-octadecadienoyl)-sn-glycero-3-phosphocholine + hexadecanoate + H(+). It catalyses the reaction 1,2-di-(9Z-octadecenoyl)-sn-glycero-3-phosphocholine + H2O = 2-(9Z-octadecenoyl)-sn-glycero-3-phosphocholine + (9Z)-octadecenoate + H(+). The catalysed reaction is 1,2-dihexadecanoyl-sn-glycero-3-phosphocholine + H2O = hexadecanoyl-sn-glycero-3-phosphocholine + hexadecanoate + H(+). It carries out the reaction 1,2-di-(9Z-octadecenoyl)-sn-glycero-3-phosphocholine + H2O = 1-(9Z-octadecenoyl)-sn-glycero-3-phosphocholine + (9Z)-octadecenoate + H(+). The enzyme catalyses 1,2-di-(9Z-octadecenoyl)-sn-glycero-3-phosphoethanolamine + 1,2-dihexadecanoyl-sn-glycero-3-phosphocholine = hexadecanoyl-sn-glycero-3-phosphocholine + N-hexadecanoyl-1,2-di-(9Z-octadecenoyl)-sn-glycero-3-phosphoethanolamine + H(+). It catalyses the reaction 1,2-di-(9Z,12Z-octadecadienoyl)-sn-glycero-3-phosphocholine + H2O = 1-(9Z,12Z)-octadecadienoyl-sn-glycero-3-phosphocholine + (9Z,12Z)-octadecadienoate + H(+). Its function is as follows. Exhibits both phospholipase A1/2 and acyltransferase activities. Shows phospholipase A1 (PLA1) and A2 (PLA2), catalyzing the calcium-independent release of fatty acids from the sn-1 or sn-2 position of glycerophospholipids. For most substrates, PLA1 activity is much higher than PLA2 activity. Shows O-acyltransferase activity, catalyzing the transfer of a fatty acyl group from glycerophospholipid to the hydroxyl group of lysophospholipid. Shows N-acyltransferase activity, catalyzing the calcium-independent transfer of a fatty acyl group at the sn-1 position of phosphatidylcholine (PC) and other glycerophospholipids to the primary amine of phosphatidylethanolamine (PE), forming N-acylphosphatidylethanolamine (NAPE), which serves as precursor for N-acylethanolamines (NAEs). Exhibits high N-acyltransferase activity and low phospholipase A1/2 activity. Required for complete organelle rupture and degradation that occur during eye lens terminal differentiation, when fiber cells that compose the lens degrade all membrane-bound organelles in order to provide lens with transparency to allow the passage of light. Organelle membrane degradation is probably catalyzed by the phospholipase activity. Plays a role in phospholipid metabolism and adipogenesis. In Pongo abelii (Sumatran orangutan), this protein is Phospholipase A and acyltransferase 3.